The following is a 292-amino-acid chain: Coatomer subunit epsilon-1 (292 aa).

This sequence belongs to the COPE family. Oligomeric complex that consists of at least the alpha, beta, beta', gamma, delta, epsilon and zeta subunits.

The protein localises to the cytoplasm. It localises to the golgi apparatus membrane. The protein resides in the cytoplasmic vesicle. Its subcellular location is the COPI-coated vesicle membrane. Its function is as follows. The coatomer is a cytosolic protein complex that binds to dilysine motifs and reversibly associates with Golgi non-clathrin-coated vesicles, which further mediate biosynthetic protein transport from the ER, via the Golgi up to the trans Golgi network. The coatomer complex is required for budding from Golgi membranes, and is essential for the retrograde Golgi-to-ER transport of dilysine-tagged proteins. In Arabidopsis thaliana (Mouse-ear cress), this protein is Coatomer subunit epsilon-1.